We begin with the raw amino-acid sequence, 159 residues long: Galactose-specific lectin nattectin (159 aa).

An N-terminal signal peptide occupies residues Met1–Ala21. A propeptide spanning residues Asn22–Thr24 is cleaved from the precursor. Cystine bridges form between Cys31–Cys42, Cys59–Cys155, and Cys132–Cys147. The 119-residue stretch at His38 to Ala156 folds into the C-type lectin domain. Ca(2+)-binding residues include Gln122, Asp124, Glu130, and Asn143. A Galactose-binding motif is present at residues Gln122–Asp124.

As to quaternary structure, monomer. Post-translationally, not glycosylated. Expressed by the venom gland.

It is found in the secreted. Functionally, galactose specific lectin that exhibits hemagglutination activity (minimum hemagluttination concentration = 2.5 ug/well) in a calcium-independent fashion. Has remarkable pro-inflammatory activity, inducing neutrophil mobilization in mice. Plays a crucial role in the innate immune system and chronic manifestations, especially in neutrophil mobilization. The polypeptide is Galactose-specific lectin nattectin (Thalassophryne nattereri (Copper Joe toadfish)).